Consider the following 333-residue polypeptide: Transcription factor HHO6 (333 aa).

The 61-residue stretch at 189-249 (ALRKQRRCWN…HLQKYRLHIR (61 aa)) folds into the HTH myb-type domain. The segment at residues 220-245 (PKQIREHMQEEGLTNDEVKSHLQKYR) is a DNA-binding region (H-T-H motif). Residues 274-333 (DEEETCEGGESLKRSNAQSDSPQGPLQLPSTTTTTGGDSSMEDVEDAKSESFQLERLRSP) form a disordered region. Polar residues predominate over residues 287–303 (RSNAQSDSPQGPLQLPS). Basic and acidic residues predominate over residues 319–333 (DAKSESFQLERLRSP).

It localises to the nucleus. Probable transcription factor involved in phosphate signaling in roots. This Arabidopsis thaliana (Mouse-ear cress) protein is Transcription factor HHO6.